Here is a 496-residue protein sequence, read N- to C-terminus: Galactose-1-phosphate uridylyltransferase (496 aa).

It belongs to the galactose-1-phosphate uridylyltransferase type 2 family.

The protein localises to the cytoplasm. It carries out the reaction alpha-D-galactose 1-phosphate + UDP-alpha-D-glucose = alpha-D-glucose 1-phosphate + UDP-alpha-D-galactose. Its pathway is carbohydrate metabolism; galactose metabolism. The chain is Galactose-1-phosphate uridylyltransferase from Staphylococcus saprophyticus subsp. saprophyticus (strain ATCC 15305 / DSM 20229 / NCIMB 8711 / NCTC 7292 / S-41).